Reading from the N-terminus, the 628-residue chain is Choline transporter-like protein 2 (628 aa).

The Cytoplasmic portion of the chain corresponds to 1 to 31; sequence MSSEDLQDHHEIGNEVIKKKGVYTKKKCQDC. Residues 32–52 traverse the membrane as a helical segment; the sequence is FFLILFLLFWAGMIVVAAFGV. The Extracellular portion of the chain corresponds to 53–204; sequence KNGKPDRIVK…EILTDLTNSW (152 aa). N-linked (GlcNAc...) asparagine glycans are attached at residues Asn82, Asn118, Asn146, and Asn168. The chain crosses the membrane as a helical span at residues 205 to 225; sequence RYLIYGALIAMGLGLTWIFLL. Arg226 is a topological domain (cytoplasmic). Residues 227–247 traverse the membrane as a helical segment; the sequence is FFAGFITWLTVFAAYACLGLL. Over 248–282 the chain is Extracellular; it reads TAQVYFQWQDSKDAYENTIPSQRLVMQEKNILALK. A helical transmembrane segment spans residues 283–303; sequence VIFIILCVVCGIFALILLALF. Residues 304 to 319 are Cytoplasmic-facing; the sequence is SRIRIAIRIIKECSRA. A helical membrane pass occupies residues 320–340; that stretch reads IGIMPSIFFFPIFIFLLLCGF. Residues 341–381 are Extracellular-facing; it reads TVYWVYIGVYLATAGSPTYDDQYRFTGYEADSKLQKIQIYH. The chain crosses the membrane as a helical span at residues 382–402; that stretch reads FFGYLWTFAFILALNQTTIAG. Topologically, residues 403–432 are cytoplasmic; it reads AISSWYWVQDKKDTPFFPVWSSFFRVIRYH. A helical transmembrane segment spans residues 433–453; the sequence is LGSIALGSLILAIVQFIRWVL. Residues 454-530 are Extracellular-facing; that stretch reads RFLEKKFKGK…RVAAVNLVSS (77 aa). Residues 531–551 form a helical membrane-spanning segment; it reads FLMFLGRVFITAATVGISLYL. Over 552–559 the chain is Cytoplasmic; that stretch reads LKEHENLS. A helical transmembrane segment spans residues 560 to 580; it reads FYIIPVILIGFIAFAISTGFM. The Extracellular segment spans residues 581–628; it reads SVYDMSIDTMLLCFCEDCERNDGSPERPYYMSKSLRKFVDGKGRSKCC.

The protein belongs to the CTL (choline transporter-like) family.

It localises to the cell membrane. The protein localises to the mitochondrion outer membrane. It carries out the reaction choline(out) + n H(+)(in) = choline(in) + n H(+)(out). The catalysed reaction is ethanolamine(out) + n H(+)(in) = ethanolamine(in) + n H(+)(out). In terms of biological role, choline/H+ antiporter, mainly in mitochodria. Also acts as a low-affinity ethanolamine/H+ antiporter, regulating the supply of extracellular ethanolamine (Etn) for the CDP-Etn pathway, redistribute intracellular Etn and balance the CDP-Cho and CDP-Etn arms of the Kennedy pathway. The chain is Choline transporter-like protein 2 (slc44a2) from Dictyostelium discoideum (Social amoeba).